The primary structure comprises 150 residues: Group IIC secretory phospholipase A2 (150 aa).

The first 20 residues, 1–20 (MKGIAVFLVFIFCWTTSTLS), serve as a signal peptide directing secretion. 8 disulfides stabilise this stretch: C46–C143, C48–C64, C63–C121, C69–C150, C70–C114, C79–C107, C97–C112, and C99–C105. Y47, G49, and G51 together coordinate Ca(2+). Residue H67 is part of the active site. Position 68 (D68) interacts with Ca(2+). The N-linked (GlcNAc...) asparagine glycan is linked to N92. The active site involves D115.

This sequence belongs to the phospholipase A2 family. It depends on Ca(2+) as a cofactor.

It localises to the secreted. The catalysed reaction is a 1,2-diacyl-sn-glycero-3-phosphocholine + H2O = a 1-acyl-sn-glycero-3-phosphocholine + a fatty acid + H(+). Its function is as follows. PA2 catalyzes the calcium-dependent hydrolysis of the 2-acyl groups in 3-sn-phosphoglycerides. In Rattus norvegicus (Rat), this protein is Group IIC secretory phospholipase A2 (Pla2g2c).